We begin with the raw amino-acid sequence, 167 residues long: MSEEKPQQSAEEPEPGEPKAKPAPEEPEPGEPKAKPAPEEPEPGEPKAKPAPEKTSDYYRISEKLPVRFNNPGWFHGYGTKEAVSMYRTSNQTYGSRAPTVHEMPKVFYPSSNKFSRQHAAFGMFQSHNINVTLEKSLVTGPDNHITHYDRLNFHPSYNVNRPSICD.

A disordered region spans residues 1 to 54 (MSEEKPQQSAEEPEPGEPKAKPAPEEPEPGEPKAKPAPEEPEPGEPKAKPAPEK). Positions 16-54 (GEPKAKPAPEEPEPGEPKAKPAPEEPEPGEPKAKPAPEK) are enriched in basic and acidic residues.

Belongs to the PIERCE1 family. As to quaternary structure, microtubule inner protein component of sperm flagellar doublet microtubules. Interacts with CFAP53, ODAD1 and ODAD3; the interactions link the outer dynein arms docking complex (ODA-DC) to the internal microtubule inner proteins (MIP) in cilium axoneme. As to expression, expressed in brain, lung, kidney and testis.

The protein resides in the cytoplasm. It localises to the cytoskeleton. The protein localises to the cilium axoneme. It is found in the flagellum axoneme. Functionally, microtubule inner protein involved in the attachment of outer dynein arms (ODAs) to dynein-decorated doublet microtubules (DMTs) in cilia axoneme. Functions at the initial step of left-right asymmetry specification of the visceral organs. This Mus musculus (Mouse) protein is Piercer of microtubule wall 1 protein.